The sequence spans 421 residues: Serine/threonine-protein kinase OXI1 (421 aa).

Residues 17–329 enclose the Protein kinase domain; sequence LEVLSLLGRG…VEEIKGHDFF (313 aa). ATP-binding positions include 23 to 31 and lysine 45; that span reads LGRGAKGVV. Aspartate 149 serves as the catalytic Proton acceptor. The segment at 167–246 is activation loop; the sequence is DFDLSTNLAP…VGTEEYVAPE (80 aa). Position 235 is a phosphoserine; by PDPK1 (serine 235). Positions 330-421 constitute an AGC-kinase C-terminal domain; it reads RGVDWEKVIL…LESDNNFLVF (92 aa). Residues 418-421 carry the PIF motif; it reads FLVF.

It belongs to the protein kinase superfamily. AGC Ser/Thr protein kinase family. As to quaternary structure, interacts with PDK1 and PDK2. As to expression, expressed in roots and root hair cells.

The enzyme catalyses L-seryl-[protein] + ATP = O-phospho-L-seryl-[protein] + ADP + H(+). The catalysed reaction is L-threonyl-[protein] + ATP = O-phospho-L-threonyl-[protein] + ADP + H(+). Its activity is regulated as follows. Activated in response to hydrogen peroxide and cellulase elicitor. Activated by PDK1 in a phosphatidic acid dependent manner. In terms of biological role, involved in oxidative burst-mediated signaling. Required for basal resistance to P.parasitica infection and root hair growth. Partly required for the activation of MPK3 and MPK6 by hydrogen peroxide and cellulase elicitor. In Arabidopsis thaliana (Mouse-ear cress), this protein is Serine/threonine-protein kinase OXI1.